Here is a 110-residue protein sequence, read N- to C-terminus: V-type proton ATPase subunit G 1 (110 aa).

This sequence belongs to the V-ATPase G subunit family. V-ATPase is a heteromultimeric enzyme composed of a peripheral catalytic V1 complex (components A to H) attached to an integral membrane V0 proton pore complex (components: a, c, c', c'' and d).

Functionally, catalytic subunit of the peripheral V1 complex of vacuolar ATPase (V-ATPase). V-ATPase is responsible for acidifying a variety of intracellular compartments in eukaryotic cells. The polypeptide is V-type proton ATPase subunit G 1 (VATG1) (Nicotiana tabacum (Common tobacco)).